Consider the following 725-residue polypeptide: Methionine--tRNA ligase (725 aa).

The 'HIGH' region signature appears at 27 to 37 (PYANGQIHIGH). Zn(2+)-binding residues include cysteine 158, cysteine 161, cysteine 171, and cysteine 174. The short motif at 348 to 352 (KMSKS) is the 'KMSKS' region element. Lysine 351 serves as a coordination point for ATP. Positions 619–725 (DFAKIDLRIA…SGAKPGMRVK (107 aa)) constitute a tRNA-binding domain.

Belongs to the class-I aminoacyl-tRNA synthetase family. MetG type 1 subfamily. In terms of assembly, homodimer. The cofactor is Zn(2+).

The protein localises to the cytoplasm. It catalyses the reaction tRNA(Met) + L-methionine + ATP = L-methionyl-tRNA(Met) + AMP + diphosphate. Its function is as follows. Is required not only for elongation of protein synthesis but also for the initiation of all mRNA translation through initiator tRNA(fMet) aminoacylation. This is Methionine--tRNA ligase from Burkholderia pseudomallei (strain 1710b).